Reading from the N-terminus, the 171-residue chain is S-ribosylhomocysteine lyase (171 aa).

The Fe cation site is built by His-54, His-58, and Cys-128.

The protein belongs to the LuxS family. Homodimer. Requires Fe cation as cofactor.

The enzyme catalyses S-(5-deoxy-D-ribos-5-yl)-L-homocysteine = (S)-4,5-dihydroxypentane-2,3-dione + L-homocysteine. In terms of biological role, involved in the synthesis of autoinducer 2 (AI-2) which is secreted by bacteria and is used to communicate both the cell density and the metabolic potential of the environment. The regulation of gene expression in response to changes in cell density is called quorum sensing. Catalyzes the transformation of S-ribosylhomocysteine (RHC) to homocysteine (HC) and 4,5-dihydroxy-2,3-pentadione (DPD). The sequence is that of S-ribosylhomocysteine lyase from Salmonella agona (strain SL483).